The sequence spans 1323 residues: DNA-directed RNA polymerase subunit beta' (1323 aa).

4 residues coordinate Zn(2+): Cys60, Cys62, Cys75, and Cys78. Residues Asp535, Asp537, and Asp539 each coordinate Mg(2+). Positions 894, 977, 984, and 987 each coordinate Zn(2+).

This sequence belongs to the RNA polymerase beta' chain family. In terms of assembly, the RNAP catalytic core consists of 2 alpha, 1 beta, 1 beta' and 1 omega subunit. When a sigma factor is associated with the core the holoenzyme is formed, which can initiate transcription. It depends on Mg(2+) as a cofactor. The cofactor is Zn(2+).

It catalyses the reaction RNA(n) + a ribonucleoside 5'-triphosphate = RNA(n+1) + diphosphate. Its function is as follows. DNA-dependent RNA polymerase catalyzes the transcription of DNA into RNA using the four ribonucleoside triphosphates as substrates. The chain is DNA-directed RNA polymerase subunit beta' from Corynebacterium urealyticum (strain ATCC 43042 / DSM 7109).